The chain runs to 60 residues: Rubredoxin 4 (60 aa).

The Rubredoxin-like domain maps to 4–55; it reads YKLYQCAQCGFEYDEAVGWPEDGIEPGTRWDDIPEDWSCPDCGAAKSDFFMV. Fe cation contacts are provided by cysteine 9, cysteine 12, cysteine 42, and cysteine 45.

This sequence belongs to the rubredoxin family. It depends on Fe(3+) as a cofactor.

Its function is as follows. Involved in the hydrocarbon hydroxylating system, which transfers electrons from NADH to rubredoxin reductase and then through rubredoxin to alkane 1 monooxygenase. This Rhodococcus sp. (strain Q15) protein is Rubredoxin 4 (rubA4).